A 123-amino-acid polypeptide reads, in one-letter code: uncharacterized protein (123 aa).

A run of 2 helical transmembrane segments spans residues 53-73 (VWFL…FFFL) and 75-95 (VLWF…VFSH).

It localises to the membrane. This is an uncharacterized protein from Saccharomyces cerevisiae (strain ATCC 204508 / S288c) (Baker's yeast).